A 306-amino-acid chain; its full sequence is Homoserine kinase (306 aa).

ATP is bound at residue P95–A105.

This sequence belongs to the GHMP kinase family. Homoserine kinase subfamily.

Its subcellular location is the cytoplasm. The enzyme catalyses L-homoserine + ATP = O-phospho-L-homoserine + ADP + H(+). It participates in amino-acid biosynthesis; L-threonine biosynthesis; L-threonine from L-aspartate: step 4/5. Its function is as follows. Catalyzes the ATP-dependent phosphorylation of L-homoserine to L-homoserine phosphate. This Corynebacterium urealyticum (strain ATCC 43042 / DSM 7109) protein is Homoserine kinase.